The primary structure comprises 5147 residues: MERLLLLFFLLLAGRESLCQTGDTKLELLAPRGRSYATTYEQYAAFPRRRSSSSSPSGEMQSRAVDTSADFEVLEGQPRGTTVGFIPTKPKFSYRFNEPPREFTLDPVTGEVKTNVVLDREGMRDHYDLVVLSSQPTYPIEVRIKVLDVNDNSPEFPEPSIAISFSESATSGTRLLLDAATDADVGENGVTDQYEIVAGNVDNKFRLVTTANPSGDTSYLHLETTGNLDRESRGSYQLNISARDGGSPPRFGYLQVNVTILDVNDNPPIFDHSDYNVSLNETALPGTPVVTVMASDNDLGDNSKITYYLAETEHQFTVNPETGVISTTERVNCPQQTNVKSSASQKSCVFTVFARDHGSPRQDGRTYVTVNLLDTNDHDPIISFRFFPDGGKVATVDENAVNGTVVAAVAVKDSDSGLNGRTSVRIVSGNELGHFRLEEAADLHIVRVNGVLDREEIGKYNLTVVAMDQGTPARTTTAHLIIDVNDVNDHEPVFEKSEYSAVLSELAPTGSFVASITATDEDTGVNAQVHYDILSGNELKWFSMDPLTGLIVTTGPLDREIRDTVELSISARDGGPNPKFAYTQLKVIILDENDEAPQFSQREQNVTLGEDAPPQTIVALMTATDHDQGTNGSVTFALAPSVERLYPLQFALDALTGQLTTRRPLDREKMSQYEISVIARDQGAPTPQSATATVWLNVADVNDNDPQFYPRHYIYSLADDDDDIKLKKEVEKERILLHVTASDKDDGDNALIEYRLESGGEGLFQLDARSGAISLRGDAPASMHWKPHYKLLVSARDAGQRRSQQDAIVEIVLKSKLEMLECGQAQAGGYEFQMVEDHEQQRNSQPNREVGIVQVKSTNGKANSHIEYDIIQGDRAQNFRIDTRSGRITTARPLDREEQANYRLTILASSSSSSSAAASSVSYGQCIVNIAIIDLNDNAPVFALDRESEPTISLPENAAVGQEIYLSRVRDRDAGVNSRISYSLTNNPNQQFRIGPVTGVLYLQRPIRAEPGSLIHVELMATDAGSPPLSSKLSLSVLIADVNDHTPVFDHTSYETSLPETTKVNTRFFALAATDIDLGDNGRISYEIIEGNTERMFGVFPDGYLFVRAPLDREERDYYALTVSCRDAGQPSRSSVVPVVIHVIDENDNAPQFTNSTFTFSIPENAPADTFVGKLTAVDRDIGRNAELSFTLSSQTQDFTIDTRNGFIKTLRPFDREALVKVSRNAEASGEDGSLRGSMAGNYMLLEATVSDNGIPRLQDKVKVKVIVTDVNDNAPEFLRAPYHVTISEGASEGTHITHVFTQDADEGLNGDVYYSLAKGNEAGQFNLDSATGQLSLGRRLDRESQEIHHLIVVAKDAALKHPLSSNASITIVVLDENDNAPEFTQSSSEVSVLETSPTGTELMRFRASDADQGVNSQVVFSISAGNRRDTFHIDSITGSLYLHKPLDYEDITSYTLNITASDCGTPSLSTTVLYNVLVVDDNDNPPIFPSTAIVRQIKEGIPLKTPIVTVTADDPDSGLNGKVSYAISKQEPQLPQGRHFGINTETGVIHTLREIDRESIDTFRLTVVATDRAQPSERQLSTEKLVTVIVEDINDNAPVFVSMNAAILPPKFSTSKGSSTAVMQVHAKDADSSSNGLVTYEIVSGPQELFKLQRNTGIITFTPGPQFKQEVRYQLTLKSTDEAVQSERRSSEVYITIITPGSGGSESSVPQFEQRSKLSGSVYENEPIGTSILTVTAHLASAEIEYFVTNVTATGSRGQVDRLFDIDAKLGILSTAAELDREAGPEEYEVEVYAIALGGQPRTSRTKVRVTVLDKNDSPPQFLDTPFVYNVSEDLQIGHTISTLRAHDPDTLGSVTFLLMDGHDGKFLLEPSTGKLILNDTLDRETKSKYELRIRVSDGVQYTEAYATIQVSDTNDNPPLFEDTVYSFDIPENAQRGYQVGQIVARDADLGQNAQLSYGVVSDWANDVFSLNPQTGMLTLTARLDYEEVQHYILIVQAQDNGQPSLSTTITVYCNVLDLNDNAPIFDPMSYSSEVFENVPIATEVVTVSAKDIDSGNNGLIEYSITAGDVDSEFGIDSNGTIRTRRNLDREHRSTYTLTVTARDCADEFASFSELEETQLKLKYRSPRKYQQTRQEFLAHQKQQRLSSTVKVTILIKDVNDEVPVFISANETAIMENVAINTVVIAVKAVDNDEGRNGYIDYLMKEARDEDMGQSDPLPFSLNPTDGQLRVVDALDRELRSSYLLNITARDRGEPPQSTESQLLIRILDENDNSPVFDPKQYSASVAENASIGAMVLQVSATDVDEGANGRIRYSIVLGDQNHDFSISEDTGVVRVAKNLNYERLSRYSLTVRAEDCALENPAGDTAELTINILDINDNRPTFLDSPYLARVMENTVPPNGGYVLTVNAYDADTPPLNSQVRYFLKEGDSDLFRINASSGDIALLKPLDREQQSEYTLTLVAMDTGSPPLTGTGIVRVEVQDINDNDPVFELQSYHATVRENLPSGTHVLTPRATDKDEGLNAKLRFNLLGEHMHRFHIDSETGEISTATTLDREETSVYHLTLMAQDSSITEPRASSVNLTISVSDVNDNIPKFDSTTYNVAVPERISKGEFVFGARALDLDDGENAVVHYTISGRDQHYFDINTKTGVVSTKLELKTKTKSHDDLTYTIVISAMDQGEQSLSSKAELTVILRPPELFPTFAYMANSHFAMSEDVRPGKMITKVSATSPKKGLVGKIRYAIAGGIMGDSLRVDPNSGLLSVGQDGLDYELTHLYEIWIEAADGDTPSLRSVTLITLNVTDANDNAPVMEQLIYNAEVLEEESPPQLIAVVKASDRDSGDNGNVIYRLQNDFDGTFEITESGEIYTRMRLDREEIGDYAFVVEAVDQGVPHMTGTASVLLHLLDKNDNPPKFTRLFSLNVTENAEIGSFVIRVTSSDLDLGANANASYSFSENPGEKFRIEPQSGNITVAGHLDREQQDEYILKVVASDGAWRAETPITITIQDQNDNAPEFEHSFYSFSFPELQQSIALVGQIIATDRDKQGPNSVISYSLQQPSPMFSIDPATGEVFSKKAVRFKHSQYVRSPENMYALTVLATDNGKPPLYSECLVNINIVDAHNNPPKFEQAEYLAPLPQDAVRGQRIVRVHANDKQDLGTNEMDYSLMTFNLSSIFSVGRHDGWITLVKPIQVPPNTRYELVVRATDRGVPPQSDETRVVIVVTGENMDTPRFSVNSYQVIVPENEPVGSTILTVGATDDDTGPNGMLRYSISGGNERQDFSVDERTGGIVIQQQLDYDLIQEYHLNITVQDLGYHPLSSVAMLTIILTDVNDNPPVFNHKEYHCYIPENKPVGTFVFQAHAADKDSPKNAIIHYAFLPSGPDRHFFIMNQSNGTISSAVSFDYEERRIYTLQIKAKNPDSSMESYANLYVHVLGVNEFYPQFLQPVFHFDVSETSAVGTRVGAVQATDKDSGEDGRVYYLLVGSSNDKGFRIDTNTGLIYVARHLDRETQNRVVLTVMAKNYGSIRGNDTDEAQVIISIQDGNDPPEFIKHYYTSTISEAAPVGTKVTTVKAIDKDVRTQNNQFSYSIINGNLKQSFKIDVQTGEISTASRLDREETSTYNLVIGAIDTGLPPQTGSATVHIELEDVNDNGPTFTPEGLNGYISENEPAGTSIMTLIASDPDLPRNGGPFTYQLIGGKHKSWLSVDRNSGVVRSTTSFDREMTPILEAIIEVEDSGKPKQKSQHLLTITVLDQNDNPSTTRSLHIAVSLFNGDLPSNVKLADVRPNDIDIVGDYRCRLQKNPAQSQLQLAIPRACDLITTSHTTPIASVFSYTGNDGKHGDVSSKVSVAFQSFNNETLANSVSIMVRNMTAYHFLANHYRPILEMIKSRMSNEDEVILYSLLEGGSGNSTNLQLLMAVRLAKTSYQQPKYLIERLREKRSAFSELLQKEVIVGYEPCSEPDVCENGGVCSATMRLLDAHSFVIQDSPALVLSGPRVVHDYSCQCTSGFSGEQCSRRQDPCLPNPCHSQVQCRRLGSDFQCMCPANRDGKHCEKERSDVCYSKPCRNGGSCQRSPDGSSYFCLCRPGFRGNQCESVSDSCRPNPCLHGGLCVSLKPGYKCNCTPGRYGRHCERFSYGFQPLSYMTFPALDVTTNDISIVFATTKPNSLLLYNYGMQSGGRSDFLAIELVHGRAYFSSGGARTAISTVIAGRNLADGGWHKVTATRNGRVMSLSVAKCADSGDVCTECLPGDSSCYADEVGPVGTLNFNKQPLMIGGLSSADPILERPGQVHSDDLVGCLHSVHIGGRALNLSLPLQQKGILAGCNRQACQPALAAERCGGFAGQCIDRWSSSLCQCGGHLQSPDCSDSLEPITLGEGAFVEFRISEIYRRMQLLDNLYNSKSAWLDNQQMRERRAVSNFSTASQIYEAPKMLSMLFRTYKDQGQILYAATNQMFTSLSLREGRLVYYSKQHLTINMTVQETSTLNDGKWHNVSLFSESRSLRLIVDGRQVGDELDIAGVHDFLDPYLTILNVGGEAFVGCLANVTVNNELQPLNGSGSIFPEVRYHGKIESGCRGDIGQDAAQVADPLSIGFTLVIVFFVILVVAILGSYVIYRFRGKQEKIGSLSCGVPGFKIKHPGGPVTQSQVDHVLVRNLHPSEAPSPPVGAGDHMRPPVGSHHLVGPELLTKKFKEPTAEMPQPQQQQQRPQRPDIIERESPLIREDHHLPIPPLHPLPLEHASSVDMGSEYPEHYDLENASSIAPSDIDIVYHYKGYREAAGLRKYKASVPPVSAYTHHKHQNSGSQQQQQQHRHTAPFVTRNQGGQPPPPPTSASRTHQSTPLARLSPSSELSSQQPRILTLHDISGKPLQSALLATTSSSGGVGKDVHSNSERSLNSPVMSQLSGQSSSASRQKPGVPQQQAQQTSMGLTAEEIERLNGRPRTCSLISTLDAVSSSSEAPRVSSSALHMSLGGDVDAHSSTSTDESGNDSFTCSEIEYDNNSLSGDGKYSTSKSLLDGRSPVSRALSGGETSRNPPTTVVKTPPIPPHAYDGFESSFRGSLSTLVASDDDIANHLSGIYRKANGAASPSATTLGWEYLLNWGPSYENLMGVFKDIAELPDTNGPSQQQQQQTQVVSTLRMPSSNGPAAPEEYV.

The signal sequence occupies residues 1 to 35 (MERLLLLFFLLLAGRESLCQTGDTKLELLAPRGRS). Cadherin domains are found at residues 36–156 (YATT…SPEF), 157–270 (PEPS…PPIF), 271–382 (DHSD…DPII), 383–494 (SFRF…EPVF), 495–599 (EKSE…APQF), 600–708 (SQRE…DPQF), 709–820 (YPRH…LEML), 821–942 (ECGQ…APVF), 943–1049 (ALDR…TPVF), 1050–1153 (DHTS…APQF), 1154–1278 (TNST…APEF), 1279–1384 (LRAP…APEF), 1385–1489 (TQSS…PPIF), 1490–1601 (PSTA…APVF), 1602–1713 (VSMN…VPQF), 1714–1823 (EQRS…PPQF), 1824–1922 (LDTP…PPLF), 1923–2027 (EDTV…APIF), 2028–2167 (DPMS…VPVF), 2168–2278 (ISAN…SPVF), 2279–2385 (DPKQ…PTFL), 2386–2491 (DSPY…DPVF), 2492–2596 (ELQS…IPKF), 2597–2703 (DSTT…FPTF), 2704–2810 (AYMA…APVM), 2811–2913 (EQLI…PPKF), 2914–3013 (TRLF…APEF), 3014–3124 (EHSF…PPKF), 3125–3229 (EQAE…TPRF), 3230–3334 (SVNS…PPVF), 3335–3439 (NHKE…YPQF), 3440–3545 (LQPV…PPEF), 3546–3651 (IKHY…GPTF), and 3652–3756 (TPEG…NPST). At 36-4583 (YATTYEQYAA…GQDAAQVADP (4548 aa)) the chain is on the extracellular side. 6 N-linked (GlcNAc...) asparagine glycosylation sites follow: Asn-239, Asn-257, Asn-276, Asn-280, Asn-402, and Asn-461. N-linked (GlcNAc...) asparagine glycans are attached at residues Asn-605 and Asn-631. Asn-1155, Asn-1367, and Asn-1458 each carry an N-linked (GlcNAc...) asparagine glycan. N-linked (GlcNAc...) asparagine glycosylation is found at Asn-1751, Asn-1831, and Asn-1880. 6 N-linked (GlcNAc...) asparagine glycosylation sites follow: Asn-2080, Asn-2171, Asn-2247, Asn-2290, Asn-2437, and Asn-2581. N-linked (GlcNAc...) asparagine glycosylation is present at Asn-2799. Asn-2920, Asn-2946, and Asn-2967 each carry an N-linked (GlcNAc...) asparagine glycan. N-linked (GlcNAc...) asparagine glycosylation is found at Asn-3167, Asn-3303, Asn-3386, Asn-3389, and Asn-3525. N-linked (GlcNAc...) asparagine glycans are attached at residues Asn-3852, Asn-3865, and Asn-3905. EGF-like domains follow at residues 3950–4011 (GYEP…EQCS), 4013–4049 (RQDP…KHCE), 4052–4090 (RSDV…NQCE), and 4092–4128 (VSDS…RHCE). 16 cysteine pairs are disulfide-bonded: Cys-3954-Cys-3966, Cys-3960-Cys-3999, Cys-4001-Cys-4010, Cys-4017-Cys-4028, Cys-4022-Cys-4037, Cys-4039-Cys-4048, Cys-4056-Cys-4067, Cys-4061-Cys-4078, Cys-4080-Cys-4089, Cys-4096-Cys-4107, Cys-4101-Cys-4116, Cys-4118-Cys-4127, Cys-4294-Cys-4320, Cys-4325-Cys-4341, Cys-4334-Cys-4350, and Cys-4352-Cys-4361. The region spanning 4129–4320 (RFSYGFQPLS…LQQKGILAGC (192 aa)) is the Laminin G-like 1 domain. N-linked (GlcNAc...) asparagine glycosylation occurs at Asn-4306. In terms of domain architecture, EGF-like 5 spans 4321-4362 (NRQACQPALAAERCGGFAGQCIDRWSSSLCQCGGHLQSPDCS). The region spanning 4402–4569 (DNQQMRERRA…RYHGKIESGC (168 aa)) is the Laminin G-like 2 domain. N-linked (GlcNAc...) asparagine glycans are attached at residues Asn-4414, Asn-4471, Asn-4487, Asn-4539, and Asn-4550. Cys-4536 and Cys-4569 are disulfide-bonded. Residues 4584-4609 (LSIGFTLVIVFFVILVVAILGSYVIY) form a helical membrane-spanning segment. Over 4610-5147 (RFRGKQEKIG…NGPAAPEEYV (538 aa)) the chain is Cytoplasmic. The tract at residues 4744–4771 (PEHYDLENASSIAPSDIDIVYHYKGYRE) is essential for stability of mitochondrial electron chain complexes I and V, and promotes interaction with ND-24. Disordered stretches follow at residues 4787–4850 (AYTH…SQQP), 4871–4921 (TSSS…QTSM), and 4967–5041 (GDVD…PIPP). The segment covering 4826-4835 (SASRTHQSTP) has biased composition (polar residues). Composition is skewed to low complexity over residues 4838–4850 (RLSP…SQQP) and 4891–4918 (SPVM…QAQQ). Residue Ser-4843 is modified to Phosphoserine. Over residues 4972–5008 (HSSTSTDESGNDSFTCSEIEYDNNSLSGDGKYSTSKS) the composition is skewed to polar residues. 2 positions are modified to phosphoserine: Ser-5054 and Ser-5061. Residues 5113–5147 (PDTNGPSQQQQQQTQVVSTLRMPSSNGPAAPEEYV) are disordered. Low complexity predominate over residues 5119 to 5131 (SQQQQQQTQVVST).

As to quaternary structure, interacts with Fbxl7. Ft-mito interacts with NADH dehydrogenase subunit ND-24 and with ATP synthase subunit ATPsynC. In terms of processing, phosphorylated by fj on Ser/Thr of cadherin domains. Phosphorylation by fj enhances binding to ds. Phosphorylated in the cytoplasmic domain in a dco-dependent manner which is promoted by ds. Proteolytically cleaved to yield stably associated N- and C-terminal fragments. The C-terminal fragment is processed further to release a 68 kDa mitochondrial fragment, Ft-mito.

The protein localises to the cell membrane. The protein resides in the apical cell membrane. Its subcellular location is the mitochondrion. Involved in regulation of planar cell polarity in the compound eye where it is required for correct specification of the R3 and R4 photoreceptor cells by regulating Fz activity in the R3/R4 precursor cells. This is likely to occur through creation of an ft gradient so that the equatorial R3/R4 precursor cell has a higher level of ft function than its polar neighbor. Also required for planar cell polarity of wing hairs. Mediates heterophilic cell adhesion in vitro and is required to stabilize ds on the cell surface. Involved in regulation of eye imaginal disk size. Upstream component of the Hippo pathway where it is likely to act as a cell surface receptor involved in regulation of tissue size and is required for the localization and stability of ex. Probably acts as a cell surface receptor for ds. Functionally, regulates mitochondrial electron transport chain integrity and promotes oxidative phosphorylation. This Drosophila melanogaster (Fruit fly) protein is Cadherin-related tumor suppressor.